The chain runs to 607 residues: MSNEAYQHDHTVNPHQKIVVNSYDWLQFRDEQDHCKSKNPITHASPGVGSNAQNSDIAEAPQVFHPSYQSLVNVPSESPRPDQTSGSNPAVGLLHNAEDKASGQEEEGSQYEIQYSVFRPLHAYPTKGLAYEQLRRKEEQEQRENFNHLVSDCIEAVETFGRELERIQTGSSGSYFVYGTRADESVPVGVFKPKDEEPYGPFSPKWTKWAHRTFFPCLFGRSCLIPNLGYICESAASLLDRRLETHLVPYTDTASIESFNFYDNRKKWVLGYNLQKKKQKKLGSFQLFLKEYINADEFFHKYPLPGMYSDVKHSFHRKSSGEDINHKPETTRNLTDETEPSKQINSSPISTESEENSKFEWTESSLSQFRLELEKLIILDYIMRNTDRGLDNWMVKLIKLSNNKWRLKLAAIDNGLSFPWKHPDEWRLYPYGWLYLPLQLLAKPFSEQMRSHFLPILTSTNWWEESYQEFLALFSRDQDFNVRMWKKQWAVLKGQAFNVVETLKDPRQGPLELVRRTRCQVIDEKMQVPCCPPPVSIFKNAIDEPIGSYSTSPMVLPSTPSTIPFHAHNQSNSNPVYYDSTLHPFANKTVIAERLQIVNSTPVFTWC.

The segment covering 73–88 (NVPSESPRPDQTSGSN) has biased composition (polar residues). Residues 73–93 (NVPSESPRPDQTSGSNPAVGL) are disordered. One can recognise a PI3K/PI4K catalytic domain in the interval 161–522 (GRELERIQTG…LVRRTRCQVI (362 aa)). The tract at residues 167 to 173 (IQTGSSG) is G-loop. Residues 318–356 (KSSGEDINHKPETTRNLTDETEPSKQINSSPISTESEEN) form a disordered region. Residues 319–330 (SSGEDINHKPET) show a composition bias toward basic and acidic residues. The span at 341-351 (SKQINSSPIST) shows a compositional bias: polar residues. The tract at residues 384–392 (RNTDRGLDN) is catalytic loop. Residues 411–431 (AIDNGLSFPWKHPDEWRLYPY) are activation loop.

Belongs to the PI3/PI4-kinase family. Interacts with LAS17. Mg(2+) is required as a cofactor. Requires Mn(2+) as cofactor.

The protein localises to the cell membrane. The protein resides in the vacuole membrane. It carries out the reaction a 1,2-diacyl-sn-glycero-3-phospho-(1D-myo-inositol) + ATP = a 1,2-diacyl-sn-glycero-3-phospho-(1D-myo-inositol 4-phosphate) + ADP + H(+). May play a role in endocytic and/or exocytic pathways. This Saccharomyces cerevisiae (strain ATCC 204508 / S288c) (Baker's yeast) protein is Phosphatidylinositol 4-kinase LSB6 (LSB6).